The following is a 123-amino-acid chain: Small ribosomal subunit protein uS12cz/uS12cy (123 aa).

Belongs to the universal ribosomal protein uS12 family. As to quaternary structure, part of the 30S ribosomal subunit.

Its subcellular location is the plastid. It is found in the chloroplast. In terms of biological role, with S4 and S5 plays an important role in translational accuracy. Located at the interface of the 30S and 50S subunits. In Gossypium barbadense (Sea Island cotton), this protein is Small ribosomal subunit protein uS12cz/uS12cy (rps12-A).